Consider the following 177-residue polypeptide: ATP synthase subunit b (177 aa).

The helical transmembrane segment at 35–55 threads the bilayer; it reads FFVVLAIFLIVLAVIGTFVVP.

Belongs to the ATPase B chain family. As to quaternary structure, F-type ATPases have 2 components, F(1) - the catalytic core - and F(0) - the membrane proton channel. F(1) has five subunits: alpha(3), beta(3), gamma(1), delta(1), epsilon(1). F(0) has three main subunits: a(1), b(2) and c(10-14). The alpha and beta chains form an alternating ring which encloses part of the gamma chain. F(1) is attached to F(0) by a central stalk formed by the gamma and epsilon chains, while a peripheral stalk is formed by the delta and b chains.

The protein resides in the cell membrane. In terms of biological role, f(1)F(0) ATP synthase produces ATP from ADP in the presence of a proton or sodium gradient. F-type ATPases consist of two structural domains, F(1) containing the extramembraneous catalytic core and F(0) containing the membrane proton channel, linked together by a central stalk and a peripheral stalk. During catalysis, ATP synthesis in the catalytic domain of F(1) is coupled via a rotary mechanism of the central stalk subunits to proton translocation. Functionally, component of the F(0) channel, it forms part of the peripheral stalk, linking F(1) to F(0). The chain is ATP synthase subunit b from Mycobacteroides abscessus (strain ATCC 19977 / DSM 44196 / CCUG 20993 / CIP 104536 / JCM 13569 / NCTC 13031 / TMC 1543 / L948) (Mycobacterium abscessus).